A 149-amino-acid chain; its full sequence is Transcriptional repressor NrdR (149 aa).

The segment at 3 to 34 is a zinc-finger region; that stretch reads CPFCTAKDTKVIDSRLVGGGHQVRRRRECNDC. The region spanning 49-139 is the ATP-cone domain; sequence PRVIKQDGSR…VYRSFEDIRE (91 aa).

It belongs to the NrdR family. It depends on Zn(2+) as a cofactor.

Functionally, negatively regulates transcription of bacterial ribonucleotide reductase nrd genes and operons by binding to NrdR-boxes. This Pseudoalteromonas translucida (strain TAC 125) protein is Transcriptional repressor NrdR.